The following is a 290-amino-acid chain: Putative OX-2 membrane glycoprotein homolog (290 aa).

The first 17 residues, 1 to 17 (MSSLMLRLLPLLYIISA), serve as a signal peptide directing secretion. Over 18 to 267 (HFVLHPETSP…SDETVFTWTV (250 aa)) the chain is Extracellular. Residues 23 to 135 (PETSPSLIYE…TFTVDNEKTS (113 aa)) enclose the Ig-like V-type domain. Cys-41 and Cys-125 are oxidised to a cystine. Residues Asn-71, Asn-104, Asn-194, and Asn-202 are each glycosylated (N-linked (GlcNAc...) asparagine; by host). In terms of domain architecture, Ig-like C2-type spans 146–236 (PIVVLYFRYL…TNQKASALVT (91 aa)). The chain crosses the membrane as a helical span at residues 268 to 288 (PLILILISVIVLLISVCIVAF). At 289-290 (KS) the chain is on the cytoplasmic side.

The protein localises to the membrane. In Homo sapiens (Human), this protein is Putative OX-2 membrane glycoprotein homolog (U85).